Reading from the N-terminus, the 257-residue chain is Indole-3-glycerol phosphate synthase (257 aa).

It belongs to the TrpC family.

The catalysed reaction is 1-(2-carboxyphenylamino)-1-deoxy-D-ribulose 5-phosphate + H(+) = (1S,2R)-1-C-(indol-3-yl)glycerol 3-phosphate + CO2 + H2O. It functions in the pathway amino-acid biosynthesis; L-tryptophan biosynthesis; L-tryptophan from chorismate: step 4/5. The chain is Indole-3-glycerol phosphate synthase from Halalkalibacterium halodurans (strain ATCC BAA-125 / DSM 18197 / FERM 7344 / JCM 9153 / C-125) (Bacillus halodurans).